A 143-amino-acid polypeptide reads, in one-letter code: Transcriptional regulator MraZ (143 aa).

2 consecutive SpoVT-AbrB domains span residues 5 to 47 (QYEH…SLEE) and 76 to 119 (AVEC…SKEV).

Belongs to the MraZ family. In terms of assembly, forms oligomers.

It is found in the cytoplasm. The protein resides in the nucleoid. This chain is Transcriptional regulator MraZ, found in Thermoanaerobacter sp. (strain X514).